The primary structure comprises 271 residues: Ribosomal RNA small subunit methyltransferase A (271 aa).

Residues N18, L20, G45, E66, D91, and N112 each contribute to the S-adenosyl-L-methionine site.

It belongs to the class I-like SAM-binding methyltransferase superfamily. rRNA adenine N(6)-methyltransferase family. RsmA subfamily.

Its subcellular location is the cytoplasm. It catalyses the reaction adenosine(1518)/adenosine(1519) in 16S rRNA + 4 S-adenosyl-L-methionine = N(6)-dimethyladenosine(1518)/N(6)-dimethyladenosine(1519) in 16S rRNA + 4 S-adenosyl-L-homocysteine + 4 H(+). Specifically dimethylates two adjacent adenosines (A1518 and A1519) in the loop of a conserved hairpin near the 3'-end of 16S rRNA in the 30S particle. May play a critical role in biogenesis of 30S subunits. This chain is Ribosomal RNA small subunit methyltransferase A, found in Vibrio atlanticus (strain LGP32) (Vibrio splendidus (strain Mel32)).